Here is a 435-residue protein sequence, read N- to C-terminus: Trigger factor (435 aa).

The PPIase FKBP-type domain occupies 163–248 (DDITLIDFTG…INEIKRKELA (86 aa)).

The protein belongs to the FKBP-type PPIase family. Tig subfamily.

The protein localises to the cytoplasm. It carries out the reaction [protein]-peptidylproline (omega=180) = [protein]-peptidylproline (omega=0). Functionally, involved in protein export. Acts as a chaperone by maintaining the newly synthesized protein in an open conformation. Functions as a peptidyl-prolyl cis-trans isomerase. The sequence is that of Trigger factor from Desulforamulus reducens (strain ATCC BAA-1160 / DSM 100696 / MI-1) (Desulfotomaculum reducens).